Consider the following 515-residue polypeptide: ATP synthase subunit alpha (515 aa).

Residue 171 to 178 (GDRQTGKT) participates in ATP binding.

The protein belongs to the ATPase alpha/beta chains family. As to quaternary structure, F-type ATPases have 2 components, CF(1) - the catalytic core - and CF(0) - the membrane proton channel. CF(1) has five subunits: alpha(3), beta(3), gamma(1), delta(1), epsilon(1). CF(0) has three main subunits: a(1), b(2) and c(9-12). The alpha and beta chains form an alternating ring which encloses part of the gamma chain. CF(1) is attached to CF(0) by a central stalk formed by the gamma and epsilon chains, while a peripheral stalk is formed by the delta and b chains.

It localises to the cell inner membrane. It carries out the reaction ATP + H2O + 4 H(+)(in) = ADP + phosphate + 5 H(+)(out). Produces ATP from ADP in the presence of a proton gradient across the membrane. The alpha chain is a regulatory subunit. This chain is ATP synthase subunit alpha, found in Xylella fastidiosa (strain Temecula1 / ATCC 700964).